We begin with the raw amino-acid sequence, 100 residues long: Small ribosomal subunit protein uS14c (100 aa).

The protein belongs to the universal ribosomal protein uS14 family. As to quaternary structure, part of the 30S ribosomal subunit.

It is found in the plastid. The protein resides in the chloroplast. In terms of biological role, binds 16S rRNA, required for the assembly of 30S particles. The protein is Small ribosomal subunit protein uS14c of Gossypium barbadense (Sea Island cotton).